A 38-amino-acid polypeptide reads, in one-letter code: Large ribosomal subunit protein bL36 (38 aa).

This sequence belongs to the bacterial ribosomal protein bL36 family.

The polypeptide is Large ribosomal subunit protein bL36 (Aster yellows witches'-broom phytoplasma (strain AYWB)).